A 430-amino-acid polypeptide reads, in one-letter code: Serine hydroxymethyltransferase (430 aa).

120–122 contributes to the (6S)-5,6,7,8-tetrahydrofolate binding site; sequence GHI. At Lys-226 the chain carries N6-(pyridoxal phosphate)lysine.

This sequence belongs to the SHMT family. In terms of assembly, homodimer. Pyridoxal 5'-phosphate is required as a cofactor.

Its subcellular location is the cytoplasm. It participates in amino-acid biosynthesis; glycine biosynthesis; glycine from L-serine: step 1/1. In terms of biological role, catalyzes the reversible interconversion of serine and glycine with a modified folate serving as the one-carbon carrier. Also exhibits a pteridine-independent aldolase activity toward beta-hydroxyamino acids, producing glycine and aldehydes, via a retro-aldol mechanism. In Pyrobaculum calidifontis (strain DSM 21063 / JCM 11548 / VA1), this protein is Serine hydroxymethyltransferase.